The primary structure comprises 487 residues: METVQLRNPPRRQLKKLDEDSLTKQPEEVFDVLEKLGEGSYGSVYKAIHKETGQIVAIKQVPVESDLQEIIKEISIMQQCDSPHVVKYYGSYFKNTDLWIVMEYCGAGSVSDIIRLRNKTLTEDEIATILQSTLKGLEYLHFMRKIHRDIKAGNILLNTEGHAKLADFGVAGQLTDTMAKRNTVIGTPFWMAPEVIQEIGYNCVADIWSLGITAIEMAEGKPPYADIHPMRAIFMIPTNPPPTFRKPELWSDNFTDFVKQCLVKSPEQRATATQLLQHPFVRSAKGVSILRDLINEAMDVKLKRQESQQREVDQDDEENSEEDEMDSGTMVRAVGDEMGTVRVASTMTDGANTMIEHDDTLPSQLGTMVINAEDEEEEGTMKRRDETMQPAKPSFLEYFEQKEKENQINSFGKSVPGPLKNSSDWKIPQDGDYEFLKSWTVEDLQKRLLALDPMMEQEIEEIRQKYQSKRQPILDAIEAKKRRQQNF.

Residue Met-1 is modified to N-acetylmethionine. Position 3 is a phosphothreonine (Thr-3). The Protein kinase domain occupies 30–281 (FDVLEKLGEG…ATQLLQHPFV (252 aa)). ATP contacts are provided by residues 36 to 44 (LGEGSYGSV) and Lys-59. Asp-149 functions as the Proton acceptor in the catalytic mechanism. Phosphothreonine; by autocatalysis is present on Thr-183. The residue at position 265 (Ser-265) is a Phosphoserine. Positions 290–310 (LRDLINEAMDVKLKRQESQQR) form a coiled coil. Positions 303-312 (KRQESQQREV) are enriched in basic and acidic residues. A disordered region spans residues 303-332 (KRQESQQREVDQDDEENSEEDEMDSGTMVR). Positions 313-326 (DQDDEENSEEDEMD) are enriched in acidic residues. Position 320 is a phosphoserine (Ser-320). 2 positions are modified to phosphothreonine: Thr-340 and Thr-367. Residue Thr-387 is modified to Phosphothreonine; by PKB/AKT1. Residues Ser-410 and Ser-414 each carry the phosphoserine modification. Tyr-433 bears the Phosphotyrosine mark. Residues 433-480 (YEFLKSWTVEDLQKRLLALDPMMEQEIEEIRQKYQSKRQPILDAIEAK) form the SARAH domain.

The protein belongs to the protein kinase superfamily. STE Ser/Thr protein kinase family. STE20 subfamily. In terms of assembly, homodimer; mediated via the coiled-coil region. Interacts with NORE1, which inhibits autoactivation. Interacts with and stabilizes SAV1. Interacts with RASSF1. Interacts with FOXO3. Interacts with RASSF2 (via SARAH domain). Interacts with AR, PKB/AKT1, TNNI3 and SIRT1. Interacts with DLG5 (via PDZ domain 3). Interacts with MARK3 in the presence of DLG5. Interacts with SCRIB in the presence of DLG5. Mg(2+) serves as cofactor. Autophosphorylated on serine and threonine residues. Phosphorylation at Thr-387 by PKB/AKT1, leads to inhibition of its: kinase activity, nuclear translocation and autophosphorylation at Thr-183. It also diminishes its cleavage by caspases and its ability to phosphorylate FOXO3. Post-translationally, proteolytically cleaved by caspase-3 during apoptosis at Asp-326 and Asp-349 resulting in a 37 kDa or a 39 kDa subunit respectively. The 39 kDa subunit is further cleaved into the 37 kDa form. Proteolytic cleavage results in kinase activation and nuclear translocation of the truncated form (MST1/N). It is less likely that cleavage at Asp-349 is a prerequisite for activation as this site is not conserved in the murine ortholog. In terms of tissue distribution, expressed in prostate cancer and levels increase from the normal to the malignant state (at protein level). Ubiquitously expressed.

Its subcellular location is the cytoplasm. The protein resides in the nucleus. It catalyses the reaction L-seryl-[protein] + ATP = O-phospho-L-seryl-[protein] + ADP + H(+). The catalysed reaction is L-threonyl-[protein] + ATP = O-phospho-L-threonyl-[protein] + ADP + H(+). Its activity is regulated as follows. Inhibited by the C-terminal non-catalytic region. Activated by caspase-cleavage. Full activation also requires homodimerization and autophosphorylation of Thr-183. Activated by RASSF1 which acts by preventing its dephosphorylation. In terms of biological role, stress-activated, pro-apoptotic kinase which, following caspase-cleavage, enters the nucleus and induces chromatin condensation followed by internucleosomal DNA fragmentation. Key component of the Hippo signaling pathway which plays a pivotal role in organ size control and tumor suppression by restricting proliferation and promoting apoptosis. The core of this pathway is composed of a kinase cascade wherein STK3/MST2 and STK4/MST1, in complex with its regulatory protein SAV1, phosphorylates and activates LATS1/2 in complex with its regulatory protein MOB1, which in turn phosphorylates and inactivates YAP1 oncoprotein and WWTR1/TAZ. Phosphorylation of YAP1 by LATS2 inhibits its translocation into the nucleus to regulate cellular genes important for cell proliferation, cell death, and cell migration. STK3/MST2 and STK4/MST1 are required to repress proliferation of mature hepatocytes, to prevent activation of facultative adult liver stem cells (oval cells), and to inhibit tumor formation. Phosphorylates 'Ser-14' of histone H2B (H2BS14ph) during apoptosis. Phosphorylates FOXO3 upon oxidative stress, which results in its nuclear translocation and cell death initiation. Phosphorylates MOBKL1A, MOBKL1B and RASSF2. Phosphorylates TNNI3 (cardiac Tn-I) and alters its binding affinity to TNNC1 (cardiac Tn-C) and TNNT2 (cardiac Tn-T). Phosphorylates FOXO1 on 'Ser-212' and regulates its activation and stimulates transcription of PMAIP1 in a FOXO1-dependent manner. Phosphorylates SIRT1 and inhibits SIRT1-mediated p53/TP53 deacetylation, thereby promoting p53/TP53 dependent transcription and apoptosis upon DNA damage. Acts as an inhibitor of PKB/AKT1. Phosphorylates AR on 'Ser-650' and suppresses its activity by intersecting with PKB/AKT1 signaling and antagonizing formation of AR-chromatin complexes. This Homo sapiens (Human) protein is Serine/threonine-protein kinase 4.